The primary structure comprises 747 residues: MSQVKSSYSYDAPSDFINFSSLDDEGDTQNIDSWFEEKANLENKLLGKNGTGGLFQGKTPLRKANLQQAIVTPLKPVDNTYYKEAEKENLVEQSIPSNACSSLEVEAAISRKTPAQPQRRSLRLSAQKDLEQKEKHHVKMKAKRCATPVIIDEILPSKKMKVSNNKKKPEEEGSAHQDTAEKNASSPEKAKGRHTVPCMPPAKQKFLKSTEEQELEKSMKMQQEVVEMRKKNEEFKKLALAGIGQPVKKSVSQVTKSVDFHFRTDERIKQHPKNQEEYKEVNFTSELRKHPSSPARVTKGCTIVKPFNLSQGKKRTFDETVSTYVPLAQQVEDFHKRTPNRYHLRSKKDDINLLPSKSSVTKICRDPQTPVLQTKHRARAVTCKSTAELEAEELEKLQQYKFKARELDPRILEGGPILPKKPPVKPPTEPIGFDLEIEKRIQERESKKKTEDEHFEFHSRPCPTKILEDVVGVPEKKVLPITVPKSPAFALKNRIRMPTKEDEEEDEPVVIKAQPVPHYGVPFKPQIPEARTVEICPFSFDSRDKERQLQKEKKIKELQKGEVPKFKALPLPHFDTINLPEKKVKNVTQIEPFCLETDRRGALKAQTWKHQLEEELRQQKEAACFKARPNTVISQEPFVPKKEKKSVAEGLSGSLVQEPFQLATEKRAKERQELEKRMAEVEAQKAQQLEEARLQEEEQKKEELARLRRELVHKANPIRKYQGLEIKSSDQPLTVPVSPKFSTRFHC.

Phosphothreonine is present on residues T59 and T72. The tract at residues 110–143 (SRKTPAQPQRRSLRLSAQKDLEQKEKHHVKMKAK) is disordered. Residues S121 and S125 each carry the phosphoserine modification. K128 carries the N6-acetyllysine modification. A Phosphothreonine modification is found at T147. The disordered stretch occupies residues 156 to 202 (PSKKMKVSNNKKKPEEEGSAHQDTAEKNASSPEKAKGRHTVPCMPPA). Over residues 167 to 181 (KKPEEEGSAHQDTAE) the composition is skewed to basic and acidic residues. S257, S292, and S293 each carry phosphoserine. Residue K305 is modified to N6-acetyllysine. The residue at position 310 (S310) is a Phosphoserine. Residue T338 is modified to Phosphothreonine. S359 is modified (phosphoserine). At T369 the chain carries Phosphothreonine. K375 carries the N6-acetyllysine modification. A Glycyl lysine isopeptide (Lys-Gly) (interchain with G-Cter in SUMO2) cross-link involves residue K477. S486 carries the phosphoserine modification. At T499 the chain carries Phosphothreonine. Glycyl lysine isopeptide (Lys-Gly) (interchain with G-Cter in SUMO2) cross-links involve residues K500 and K641. S738 carries the phosphoserine modification. K740 participates in a covalent cross-link: Glycyl lysine isopeptide (Lys-Gly) (interchain with G-Cter in SUMO2).

It belongs to the TPX2 family. As to quaternary structure, interacts with AURKA. Interacts with importin-alpha; leading to inactivate TPX2. Interacts with HNRNPU; this interaction recruits HNRNPU to spindle microtubules (MTs). Interacts with BCL2L10. Interacts with KIF11. Expressed in lung carcinoma cell lines but not in normal lung tissues.

The protein resides in the nucleus. The protein localises to the cytoplasm. It localises to the cytoskeleton. It is found in the spindle. Its subcellular location is the spindle pole. Spindle assembly factor required for normal assembly of mitotic spindles. Required for normal assembly of microtubules during apoptosis. Required for chromatin and/or kinetochore dependent microtubule nucleation. Mediates AURKA localization to spindle microtubules. Activates AURKA by promoting its autophosphorylation at 'Thr-288' and protects this residue against dephosphorylation. TPX2 is inactivated upon binding to importin-alpha. At the onset of mitosis, GOLGA2 interacts with importin-alpha, liberating TPX2 from importin-alpha, allowing TPX2 to activate AURKA kinase and stimulate local microtubule nucleation. This is Targeting protein for Xklp2 (TPX2) from Homo sapiens (Human).